The sequence spans 403 residues: Large ribosomal subunit protein uL3 (403 aa).

The disordered stretch occupies residues 1–37; that stretch reads MSHRKFSAPRHGSLGFLPRKRSSRHRGKVKSFPKDDP. Ser-13 carries the post-translational modification Phosphoserine. Over residues 18–31 the composition is skewed to basic residues; it reads PRKRSSRHRGKVKS. Lys-39 is covalently cross-linked (Glycyl lysine isopeptide (Lys-Gly) (interchain with G-Cter in SUMO2)). Lys-136 is modified (N6-acetyllysine). Residues Lys-224 and Lys-226 each participate in a glycyl lysine isopeptide (Lys-Gly) (interchain with G-Cter in SUMO2) cross-link. Tele-methylhistidine is present on His-245. An N6-acetyllysine; alternate mark is found at Lys-286 and Lys-294. Lys-286 participates in a covalent cross-link: Glycyl lysine isopeptide (Lys-Gly) (interchain with G-Cter in SUMO2); alternate. Lys-294 is covalently cross-linked (Glycyl lysine isopeptide (Lys-Gly) (interchain with G-Cter in SUMO1); alternate). Ser-304 carries the phosphoserine modification. Lys-366 is modified (N6-acetyllysine; alternate). Lys-366 is covalently cross-linked (Glycyl lysine isopeptide (Lys-Gly) (interchain with G-Cter in SUMO2); alternate). The residue at position 373 (Lys-373) is an N6-acetyllysine. Residues Lys-386, Lys-393, and Lys-399 each participate in a glycyl lysine isopeptide (Lys-Gly) (interchain with G-Cter in SUMO2) cross-link.

Belongs to the universal ribosomal protein uL3 family. In terms of assembly, component of the large ribosomal subunit. Interacts with DHX33. Constitutively monomethylated at His-245 by METTL18. Methylation at His-245 regulates translation elongation by slowing ribosome traversal on tyrosine codons: slower elongation provides enough time for proper folding of synthesized proteins and prevents cellular aggregation of tyrosine-rich proteins It is not required for incorporation of RPL3 into ribosomes.

Its subcellular location is the nucleus. The protein resides in the nucleolus. The protein localises to the cytoplasm. Its function is as follows. Component of the large ribosomal subunit. The ribosome is a large ribonucleoprotein complex responsible for the synthesis of proteins in the cell. The polypeptide is Large ribosomal subunit protein uL3 (RPL3) (Macaca fascicularis (Crab-eating macaque)).